Here is a 340-residue protein sequence, read N- to C-terminus: Guanine nucleotide-binding protein G(I)/G(S)/G(T) subunit beta-3 (340 aa).

WD repeat units follow at residues 53 to 83 (GHLA…IVWD), 95 to 125 (LRSS…SIYN), 141 to 170 (AHTG…ALWD), 182 to 212 (GHTG…KLWD), 224 to 254 (GHES…RLFD), 268 to 298 (SIIC…NVWD), and 310 to 340 (GHDN…KIWN).

It belongs to the WD repeat G protein beta family. G proteins are composed of 3 units, alpha, beta and gamma. Interacts with RASD2.

Guanine nucleotide-binding proteins (G proteins) are involved as a modulator or transducer in various transmembrane signaling systems. The beta and gamma chains are required for the GTPase activity, for replacement of GDP by GTP, and for G protein-effector interaction. The sequence is that of Guanine nucleotide-binding protein G(I)/G(S)/G(T) subunit beta-3 (Gnb3) from Mus musculus (Mouse).